Here is a 491-residue protein sequence, read N- to C-terminus: Ketol-acid reductoisomerase (NADP(+)) (491 aa).

The KARI N-terminal Rossmann domain maps to alanine 15–serine 208. Residues cysteine 45–glutamine 48, arginine 68, arginine 76, serine 78, and aspartate 108–glutamine 110 contribute to the NADP(+) site. Histidine 132 is a catalytic residue. Glycine 158 is an NADP(+) binding site. 2 consecutive KARI C-terminal knotted domains span residues serine 209 to glutamine 344 and tyrosine 345 to methionine 484. Residues aspartate 217, glutamate 221, glutamate 389, and glutamate 393 each coordinate Mg(2+). Serine 414 is a substrate binding site.

Belongs to the ketol-acid reductoisomerase family. Mg(2+) serves as cofactor.

It carries out the reaction (2R)-2,3-dihydroxy-3-methylbutanoate + NADP(+) = (2S)-2-acetolactate + NADPH + H(+). It catalyses the reaction (2R,3R)-2,3-dihydroxy-3-methylpentanoate + NADP(+) = (S)-2-ethyl-2-hydroxy-3-oxobutanoate + NADPH + H(+). It functions in the pathway amino-acid biosynthesis; L-isoleucine biosynthesis; L-isoleucine from 2-oxobutanoate: step 2/4. It participates in amino-acid biosynthesis; L-valine biosynthesis; L-valine from pyruvate: step 2/4. Involved in the biosynthesis of branched-chain amino acids (BCAA). Catalyzes an alkyl-migration followed by a ketol-acid reduction of (S)-2-acetolactate (S2AL) to yield (R)-2,3-dihydroxy-isovalerate. In the isomerase reaction, S2AL is rearranged via a Mg-dependent methyl migration to produce 3-hydroxy-3-methyl-2-ketobutyrate (HMKB). In the reductase reaction, this 2-ketoacid undergoes a metal-dependent reduction by NADPH to yield (R)-2,3-dihydroxy-isovalerate. The sequence is that of Ketol-acid reductoisomerase (NADP(+)) from Escherichia fergusonii (strain ATCC 35469 / DSM 13698 / CCUG 18766 / IAM 14443 / JCM 21226 / LMG 7866 / NBRC 102419 / NCTC 12128 / CDC 0568-73).